A 53-amino-acid chain; its full sequence is Unknown protein from 2D-PAGE of needles (53 aa).

This chain is Unknown protein from 2D-PAGE of needles, found in Pinus pinaster (Maritime pine).